Reading from the N-terminus, the 324-residue chain is Probable UDP-sugar transporter protein SLC35A4 (324 aa).

The Cytoplasmic portion of the chain corresponds to 1 to 18 (MSVEDGGMPGLGRPRQAR). Residues 19–39 (WTLMLLLSTAMYGAHAPLLAL) traverse the membrane as a helical segment. Residues 40-52 (CHVDGRVPFRPSS) lie on the Lumenal side of the membrane. The helical transmembrane segment at 53–73 (AVLLTELTKLLLCAFSLLVGW) threads the bilayer. The Cytoplasmic segment spans residues 74 to 85 (QAWPQGPPPWRQ). Residues 86–106 (AAPFALSALLYGANNNLVIYL) traverse the membrane as a helical segment. Residues 107–142 (QRYMDPSTYQVLSNLKIGSTAVLYCLCLRHRLSVRQ) are Lumenal-facing. The helical transmembrane segment at 143-163 (GLALLLLMAAGACYAAGGLQV) threads the bilayer. Residues 164–180 (PGNTLPSPPPAAAASPM) are Cytoplasmic-facing. The chain crosses the membrane as a helical span at residues 181-201 (PLHITPLGLLLLILYCLISGL). The Lumenal portion of the chain corresponds to 202 to 214 (SSVYTELLMKRQR). The chain crosses the membrane as a helical span at residues 215 to 235 (LPLALQNLFLYTFGVLLNLGL). Topologically, residues 236 to 250 (HAGGGSGPGLLEGFS) are cytoplasmic. Residues 251-271 (GWAALVVLSQALNGLLMSAVM) traverse the membrane as a helical segment. Topologically, residues 272 to 275 (KHGS) are lumenal. Residues 276-298 (SITRLFVVSCSLVVNAVLSAVLL) form a helical membrane-spanning segment. The Cytoplasmic segment spans residues 299–324 (RLQLTAAFFLATLLIGLAMRLYYGSR).

It belongs to the nucleotide-sugar transporter family. SLC35A subfamily. In terms of assembly, found in a complex with SLC35A2 and SLC35A3.

The protein localises to the golgi apparatus membrane. The catalysed reaction is CDP-L-ribitol(in) + CDP(out) = CDP-L-ribitol(out) + CDP(in). In terms of biological role, mediates the transport of CDP-ribitol. Does not exhibit CMP-sialic acid, UDP-galactose and UDP-N-acetylglucosamine transport activity. The protein is Probable UDP-sugar transporter protein SLC35A4 of Homo sapiens (Human).